The primary structure comprises 389 residues: Methionyl-tRNA formyltransferase, mitochondrial (389 aa).

Belongs to the Fmt family.

The protein resides in the mitochondrion. The enzyme catalyses L-methionyl-tRNA(fMet) + (6R)-10-formyltetrahydrofolate = N-formyl-L-methionyl-tRNA(fMet) + (6S)-5,6,7,8-tetrahydrofolate + H(+). Methionyl-tRNA formyltransferase that formylates methionyl-tRNA in mitochondria and is crucial for translation initiation. In Homo sapiens (Human), this protein is Methionyl-tRNA formyltransferase, mitochondrial (MTFMT).